The chain runs to 441 residues: MASVSFQDRGRKRVPLSLYAPLRVTNDKPLSKVLANNAVPTNKGNKDQQIGYWNEQIRWRMRRGERIEQPSNWHFYYLGTGPHGDLRYRTRTEGVFWVAKEGAKTEPTNLGVRKASEKPIIPKFSQQLPSVVEIVEPNTPPASRANSRSRSRGNGNNRSRSPSNNRGNNQSRGNSQNRGNNQGRGASQNRGGNNNNNNKSRNQSNNRNQSNDRGGVTSRDDLVAAVKDALKSLGIGENPDRHKQQQKPKQEKSDNSGKNTPKKNKSRATSKERDLKDIPEWRRIPKGENSVAACFGPRGGFKNFGDAEFVEKGVDASGYAQIASLAPNVAALLFGGNVAVRELADSYEITYNYKMTVPKSDPNVELLVSQVDAFKTGNAKLQRKKEKKNKRETTLQQHEEAIYDDVGAPSDVTHANLEWDTAVDGGDTAVEIINEIFDTGN.

Ser5 carries the post-translational modification Phosphoserine; by host. A CoV N NTD domain is found at 14 to 136 (VPLSLYAPLR…QLPSVVEIVE (123 aa)). An RNA-binding region spans residues 16 to 146 (LSLYAPLRVT…PNTPPASRAN (131 aa)). Disordered stretches follow at residues 131-219 (VVEI…VTSR) and 231-278 (KSLG…LKDI). Position 143 is a phosphoserine; by host (Ser143). A compositionally biased stretch (low complexity) spans 143–215 (SRANSRSRSR…NRNQSNDRGG (73 aa)). Composition is skewed to basic and acidic residues over residues 238–255 (NPDR…KSDN) and 269–278 (TSKERDLKDI). Residues 266-382 (SRATSKERDL…AFKTGNAKLQ (117 aa)) form the CoV N CTD domain. Residues 277–379 (DIPEWRRIPK…QVDAFKTGNA (103 aa)) form a dimerization region.

The protein belongs to the alphacoronavirus nucleocapsid protein family. Homooligomer. Both monomeric and oligomeric forms interact with RNA. Interacts with protein M. Interacts with NSP3; this interaction serves to tether the genome to the newly translated replicase-transcriptase complex at a very early stage of infection. Interacts with host RSAD2; this interaction inhibits viral replication. In terms of processing, ADP-ribosylated. The ADP-ribosylation is retained in the virion during infection. Phosphorylated on serine and threonine residues.

The protein localises to the virion. Its subcellular location is the host endoplasmic reticulum-Golgi intermediate compartment. The protein resides in the host Golgi apparatus. In terms of biological role, packages the positive strand viral genome RNA into a helical ribonucleocapsid (RNP) and plays a fundamental role during virion assembly through its interactions with the viral genome and membrane protein M. Plays an important role in enhancing the efficiency of subgenomic viral RNA transcription as well as viral replication. The protein is Nucleoprotein of Porcine epidemic diarrhea virus (strain CV777) (PEDV).